Here is a 77-residue protein sequence, read N- to C-terminus: U8-lycotoxin-Ls1b (77 aa).

The first 20 residues, 1-20 (MKLIIFTGLVLFAIVSLIEA), serve as a signal peptide directing secretion. Residues 21–26 (QAENEK) constitute a propeptide that is removed on maturation.

It belongs to the neurotoxin 19 (CSTX) family. 08 (U8-Lctx) subfamily. In terms of processing, contains 4 disulfide bonds. As to expression, expressed by the venom gland.

Its subcellular location is the secreted. This is U8-lycotoxin-Ls1b from Lycosa singoriensis (Wolf spider).